Reading from the N-terminus, the 242-residue chain is Large ribosomal subunit protein uL30x (242 aa).

It belongs to the universal ribosomal protein uL30 family.

The chain is Large ribosomal subunit protein uL30x (RPL7C) from Arabidopsis thaliana (Mouse-ear cress).